The primary structure comprises 126 residues: Large ribosomal subunit protein bL12 (126 aa).

Belongs to the bacterial ribosomal protein bL12 family. In terms of assembly, homodimer. Part of the ribosomal stalk of the 50S ribosomal subunit. Forms a multimeric L10(L12)X complex, where L10 forms an elongated spine to which 2 to 4 L12 dimers bind in a sequential fashion. Binds GTP-bound translation factors.

Functionally, forms part of the ribosomal stalk which helps the ribosome interact with GTP-bound translation factors. Is thus essential for accurate translation. In Methylobacterium sp. (strain 4-46), this protein is Large ribosomal subunit protein bL12.